A 409-amino-acid polypeptide reads, in one-letter code: U-box domain-containing protein 28 (409 aa).

The 75-residue stretch at 10-84 (TVPCFFKCPI…DHWSDSINRR (75 aa)) folds into the U-box domain. ARM repeat units lie at residues 178–218 (RLSN…FIAV), 219–261 (DAES…AIAS), and 263–304 (KRVK…AISS).

The enzyme catalyses S-ubiquitinyl-[E2 ubiquitin-conjugating enzyme]-L-cysteine + [acceptor protein]-L-lysine = [E2 ubiquitin-conjugating enzyme]-L-cysteine + N(6)-ubiquitinyl-[acceptor protein]-L-lysine.. It participates in protein modification; protein ubiquitination. In terms of biological role, functions as an E3 ubiquitin ligase. The protein is U-box domain-containing protein 28 (PUB28) of Arabidopsis thaliana (Mouse-ear cress).